Consider the following 152-residue polypeptide: Ribosome maturation factor RimP (152 aa).

This sequence belongs to the RimP family.

Its subcellular location is the cytoplasm. In terms of biological role, required for maturation of 30S ribosomal subunits. The protein is Ribosome maturation factor RimP of Yersinia enterocolitica serotype O:8 / biotype 1B (strain NCTC 13174 / 8081).